The sequence spans 385 residues: Aspartate carbamoyltransferase 2, chloroplastic (385 aa).

A chloroplast-targeting transit peptide spans 1–30 (MTASSSLFSCSMHMEVLTPKISKWPKNFVS). 2 residues coordinate carbamoyl phosphate: Arg131 and Thr132. Positions 131 and 132 each coordinate UMP. Residue Lys161 coordinates L-aspartate. Carbamoyl phosphate-binding residues include Arg182, His210, and Gln213. Positions 182 and 210 each coordinate UMP. UMP is bound by residues Arg243 and Arg305. Arg243 and Arg305 together coordinate L-aspartate. Residues Leu345 and Pro346 each contribute to the carbamoyl phosphate site.

Belongs to the aspartate/ornithine carbamoyltransferase superfamily. ATCase family. As to quaternary structure, homotrimer.

It is found in the plastid. It localises to the chloroplast. It carries out the reaction carbamoyl phosphate + L-aspartate = N-carbamoyl-L-aspartate + phosphate + H(+). Its pathway is pyrimidine metabolism; UMP biosynthesis via de novo pathway; (S)-dihydroorotate from bicarbonate: step 2/3. Its activity is regulated as follows. Feedback inhibited by UMP. Functionally, catalyzes the condensation of carbamoyl phosphate and aspartate to form carbamoyl aspartate and inorganic phosphate, the committed step in the de novo pyrimidine nucleotide biosynthesis pathway. The protein is Aspartate carbamoyltransferase 2, chloroplastic (PYRB2) of Pisum sativum (Garden pea).